The chain runs to 253 residues: Probable transcriptional regulatory protein Tery_2125 (253 aa).

The protein belongs to the TACO1 family.

It is found in the cytoplasm. The polypeptide is Probable transcriptional regulatory protein Tery_2125 (Trichodesmium erythraeum (strain IMS101)).